A 57-amino-acid chain; its full sequence is Large ribosomal subunit protein bL33 (57 aa).

It belongs to the bacterial ribosomal protein bL33 family.

In Shewanella halifaxensis (strain HAW-EB4), this protein is Large ribosomal subunit protein bL33.